The following is a 348-amino-acid chain: Small ribosomal subunit protein mS45 (348 aa).

The span at 37–57 (SCSSSSPQSSQPTTHQQQCSS) shows a compositional bias: low complexity. Residues 37-63 (SCSSSSPQSSQPTTHQQQCSSFSTTAP) are disordered.

It belongs to the mitochondrion-specific ribosomal protein mS45 family. As to quaternary structure, component of the mitochondrial small ribosomal subunit (mt-SSU). Mature N.crassa 74S mitochondrial ribosomes consist of a small (37S) and a large (54S) subunit. The 37S small subunit contains a 16S ribosomal RNA (16S mt-rRNA) and 32 different proteins. The 54S large subunit contains a 23S rRNA (23S mt-rRNA) and 42 different proteins.

Its subcellular location is the mitochondrion. Functionally, component of the mitochondrial ribosome (mitoribosome), a dedicated translation machinery responsible for the synthesis of mitochondrial genome-encoded proteins, including at least some of the essential transmembrane subunits of the mitochondrial respiratory chain. The mitoribosomes are attached to the mitochondrial inner membrane and translation products are cotranslationally integrated into the membrane. In Neurospora crassa (strain ATCC 24698 / 74-OR23-1A / CBS 708.71 / DSM 1257 / FGSC 987), this protein is Small ribosomal subunit protein mS45 (mrps35).